Here is a 137-residue protein sequence, read N- to C-terminus: uncharacterized protein (137 aa).

This is an uncharacterized protein from Mycobacterium leprae (strain TN).